A 90-amino-acid chain; its full sequence is uncharacterized protein (90 aa).

Transmembrane regions (helical) follow at residues 5–27 (FDIL…IIYI), 40–62 (IYLS…TFVA), and 67–89 (MSVV…YSIV).

The protein localises to the cell membrane. This is an uncharacterized protein from Archaeoglobus fulgidus (strain ATCC 49558 / DSM 4304 / JCM 9628 / NBRC 100126 / VC-16).